The primary structure comprises 3722 residues: Vitelline envelope sperm lysin receptor (3722 aa).

An N-terminal signal peptide occupies residues 1 to 24 (MSGMQWSFGFSCLFFLKTVWICQA). Residues 25–3698 (FDADTPDPRV…TPSTDMATVQ (3674 aa)) lie on the Extracellular side of the membrane. Cystine bridges form between C43/C141 and C72/C104. A VERL 1 repeat occupies 77–155 (MQMTRGRGIN…SQASNAPEPK (79 aa)). N-linked (GlcNAc...) asparagine glycosylation is found at N115, N122, and N142. The tract at residues 146–169 (SQASNAPEPKASPTSSTPQPEAAS) is disordered. The segment covering 157–169 (SPTSSTPQPEAAS) has biased composition (polar residues). An N-linked (GlcNAc...) asparagine glycan is attached at N171. 2 cysteine pairs are disulfide-bonded: C182-C280 and C211-C243. The stretch at 216-293 (VPITHEHGFN…KSPDAPKPES (78 aa)) is one VERL 2 repeat. N254 carries N-linked (GlcNAc...) asparagine glycosylation. Residues 279 to 335 (QCYMPKSPDAPKPESCLSSPPEPEASPSSNAPEPETYPTSSAPEKVSSDQPAPSHNQ) are disordered. Low complexity predominate over residues 291–312 (PESCLSSPPEPEASPSSNAPEP). Residues 315–335 (YPTSSAPEKVSSDQPAPSHNQ) are compositionally biased toward polar residues. N334 and N373 each carry an N-linked (GlcNAc...) asparagine glycan. Cystine bridges form between C345-C443 and C374-C406. The stretch at 379-455 (VPITQEFGIN…PKSPVAPKPE (77 aa)) is one VERL 3 repeat. N-linked (GlcNAc...) asparagine glycosylation is found at N417, N438, N487, N501, N526, N570, N591, N640, N654, N679, N723, N744, N793, N807, N832, N876, N897, N946, N960, N985, N1029, N1050, N1099, N1113, N1138, N1182, N1203, N1252, N1266, N1291, N1335, N1356, N1405, N1419, N1443, and N1487. Positions 443-488 (CYMPKSPVAPKPETGPTSNAPEPETYPTSSAPEKVSSDQPAPSHNQ) are disordered. The span at 457–488 (GPTSNAPEPETYPTSSAPEKVSSDQPAPSHNQ) shows a compositional bias: polar residues. The stretch at 532-608 (VPITQEFGIN…PKSPVAPKPE (77 aa)) is one VERL 4 repeat. The disordered stretch occupies residues 603-641 (VAPKPETGPTSNAPEPETYPTSSAPEKVSSDQPAPSHNQ). Residues 610–641 (GPTSNAPEPETYPTSSAPEKVSSDQPAPSHNQ) show a composition bias toward polar residues. The stretch at 685–761 (VPITQEFGIN…PKSPVAPKPE (77 aa)) is one VERL 5 repeat. The segment at 756 to 794 (VAPKPETGPSSNAPEPETYPTSSAPEKVSSDQPAPSHNQ) is disordered. The span at 763–794 (GPSSNAPEPETYPTSSAPEKVSSDQPAPSHNQ) shows a compositional bias: polar residues. One copy of the VERL 6 repeat lies at 838–914 (VPITQEFGIN…PKSPVAPKPE (77 aa)). The disordered stretch occupies residues 909–947 (VAPKPETGPTSNAPEPETYPTSSAPEKVSSDQPAPSHNQ). The segment covering 916-947 (GPTSNAPEPETYPTSSAPEKVSSDQPAPSHNQ) has biased composition (polar residues). A VERL 7 repeat occupies 991–1067 (VPITHEFGIN…PKSPVAPKPE (77 aa)). Residues 1062–1100 (VAPKPETGPTSNAPEPETYPTSSAPEKVSSDQPAPSHNQ) are disordered. Residues 1069–1100 (GPTSNAPEPETYPTSSAPEKVSSDQPAPSHNQ) show a composition bias toward polar residues. The stretch at 1144–1220 (VPITQEFGIN…PKSPVAPKPE (77 aa)) is one VERL 8 repeat. The tract at residues 1215–1253 (VAPKPETGPTSNAPEPETYPTSSAPEKVSSDQPAPSHNQ) is disordered. Residues 1222 to 1253 (GPTSNAPEPETYPTSSAPEKVSSDQPAPSHNQ) are compositionally biased toward polar residues. Residues 1297 to 1373 (VPITHKFGIN…PKSPVAHKPE (77 aa)) form a VERL 9 repeat. Positions 1368–1406 (VAHKPETGPTSNAPEPETYPTSSAPEKVSSDQPAPSHNQ) are disordered. The segment covering 1375-1406 (GPTSNAPEPETYPTSSAPEKVSSDQPAPSHNQ) has biased composition (polar residues). A VERL 10 repeat occupies 1449 to 1525 (VPITHEFGIN…PKSPVAPKPE (77 aa)). The disordered stretch occupies residues 1519-1556 (PVAPKPETGPSSNAPEPETYPTSSAPEKVYSDQPAPSH). Residues 1527–1543 (GPSSNAPEPETYPTSSA) show a composition bias toward polar residues. N-linked (GlcNAc...) asparagine glycosylation is found at N1557, N1571, N1596, N1640, N1661, N1710, N1724, N1749, N1793, N1814, N1863, N1877, N1902, N1946, N1967, N2016, N2030, N2055, N2099, N2120, N2169, N2183, N2208, N2252, N2273, N2322, N2336, N2361, N2405, N2426, N2475, N2489, N2514, N2558, N2579, N2628, N2642, N2667, N2711, N2732, N2781, N2795, N2820, N2864, N2885, N2934, N2948, N2973, N3017, N3038, N3087, N3101, N3126, N3170, N3191, N3229, N3243, N3268, N3312, and N3333. The stretch at 1602 to 1678 (VPITHEFGIN…PKSPVAPKPE (77 aa)) is one VERL 11 repeat. The tract at residues 1672–1711 (PVAPKPETGPTSNAPEPQTYPTSSAPEKVSSDQPAPSHNQ) is disordered. The span at 1680–1711 (GPTSNAPEPQTYPTSSAPEKVSSDQPAPSHNQ) shows a compositional bias: polar residues. Residues 1755–1831 (VPITQEFGIN…PKSPVAPKPE (77 aa)) form a VERL 12 repeat. Residues 1826–1864 (VAPKPETGPTSNAPEPETYPTSSAPEKVSSDQPAPSHNQ) form a disordered region. Polar residues predominate over residues 1833 to 1864 (GPTSNAPEPETYPTSSAPEKVSSDQPAPSHNQ). Residues 1908-1984 (VPITHEFGIN…PKSPVAPKPE (77 aa)) form a VERL 13 repeat. The interval 1979–2017 (VAPKPETGPTSNAPEPETYPTSSAPEKVSSDQPAPSHNQ) is disordered. The segment covering 1986-2017 (GPTSNAPEPETYPTSSAPEKVSSDQPAPSHNQ) has biased composition (polar residues). The VERL 14 repeat unit spans residues 2061–2137 (VPITQEFGIN…PKSPVAPKPE (77 aa)). The interval 2132–2170 (VAPKPETGPTSNAPEPETYPTSSAPEKVSSDQPAPSHNQ) is disordered. Positions 2139–2170 (GPTSNAPEPETYPTSSAPEKVSSDQPAPSHNQ) are enriched in polar residues. A VERL 15 repeat occupies 2214–2290 (VPITQEFGIN…PKSPVAPKPE (77 aa)). Residues 2285-2323 (VAPKPETGPTSNAPEPETYPTSSAPEKVSSDQPAPSHNQ) form a disordered region. Polar residues predominate over residues 2292–2323 (GPTSNAPEPETYPTSSAPEKVSSDQPAPSHNQ). The stretch at 2367-2443 (VPITQEFGIN…PKSPVAPKPE (77 aa)) is one VERL 16 repeat. Residues 2438–2476 (VAPKPETGPTSNAPEPETYPTSSAPEKVSSDQPAPSHNQ) form a disordered region. Residues 2445 to 2476 (GPTSNAPEPETYPTSSAPEKVSSDQPAPSHNQ) show a composition bias toward polar residues. One copy of the VERL 17 repeat lies at 2520–2596 (VPITQEFGIN…PKSPVAPKPE (77 aa)). Positions 2590–2629 (PVAPKPETGPTSNAPEPQTYPTSSAPEKVSSDQPAPSHNQ) are disordered. Polar residues predominate over residues 2598–2629 (GPTSNAPEPQTYPTSSAPEKVSSDQPAPSHNQ). One copy of the VERL 18 repeat lies at 2673-2749 (VPITQEFGIN…PKSPVAPKPE (77 aa)). The tract at residues 2744-2782 (VAPKPETGPTSNAPEPETYPTSSAPEKVSSDQPAPSHNQ) is disordered. Positions 2751–2782 (GPTSNAPEPETYPTSSAPEKVSSDQPAPSHNQ) are enriched in polar residues. A VERL 19 repeat occupies 2826 to 2902 (VPITHEFGIN…PKSPVAPKPE (77 aa)). The disordered stretch occupies residues 2897 to 2935 (VAPKPETGPTSNAPEPQTYPTSSAPEKVSSDQPAPSHNQ). The segment covering 2904–2935 (GPTSNAPEPQTYPTSSAPEKVSSDQPAPSHNQ) has biased composition (polar residues). The stretch at 2979–3055 (VPITQEFGIN…PKSPVAPKPE (77 aa)) is one VERL 20 repeat. Positions 3050-3088 (VAPKPETGPTSNAPEPETYPTSSAPEKVSSDQPAPSHNQ) are disordered. Over residues 3057–3088 (GPTSNAPEPETYPTSSAPEKVSSDQPAPSHNQ) the composition is skewed to polar residues. A VERL 21 repeat occupies 3132–3208 (VPITQEFGIN…PKSPVAPKPE (77 aa)). A disordered region spans residues 3205–3230 (PKPETYPTSSAPEKVSSDQPAPSHNQ). Residues 3210–3230 (YPTSSAPEKVSSDQPAPSHNQ) show a composition bias toward polar residues. A VERL 22 repeat occupies 3274–3351 (VPITHEFGIN…KSPVAPKPEA (78 aa)). The interval 3345–3407 (VAPKPEASPT…RKSNQTTSTE (63 aa)) is disordered. The segment covering 3352–3375 (SPTSNAPEPQTYPTSSAPGTSPEG) has biased composition (polar residues). N-linked (GlcNAc...) asparagine glycans are attached at residues N3388, N3401, N3449, N3456, N3559, and N3650. Positions 3408–3670 (DVLDDTSNYI…SSCSNQRRTR (263 aa)) constitute a ZP domain. Residues 3699–3719 (VALLVAVALLITQLAGLAIYV) form a helical membrane-spanning segment. Residues 3720 to 3722 (NIN) are Cytoplasmic-facing.

As to quaternary structure, may form disulfide-linked homodimers. Interacts (via VERL repeats) with sperm lysin. Each VERL chain can bind numerous lysin molecules. In terms of processing, N-glycosylated. About half of the glycoprotein mass corresponds to carbohydrate chains. N-glycosylation is not required for lysin binding. Post-translationally, O-glycosylated. O-glycosylation is not required for lysin binding.

The protein localises to the cell membrane. Its subcellular location is the secreted. It localises to the extracellular space. The protein resides in the extracellular matrix. Its function is as follows. Structural component of the egg vitelline envelope; forms long filaments. Functions as a species-specific receptor for the sperm protein lysin; prevents fertilization by sperm from other species. Each VERL chain can bind multiple copies of the sperm protein lysin; this creates a 3 um hole in the egg vitelline envelope through which the sperm passes. In Haliotis rufescens (California red abalone), this protein is Vitelline envelope sperm lysin receptor.